The following is a 90-amino-acid chain: UPF0335 protein RPA4190 (90 aa).

Belongs to the UPF0335 family.

This chain is UPF0335 protein RPA4190, found in Rhodopseudomonas palustris (strain ATCC BAA-98 / CGA009).